Reading from the N-terminus, the 661-residue chain is uncharacterized protein (661 aa).

A disordered region spans residues 25 to 52 (LLPSEPPVGDMNNEDSDTNTSITQSPTN). Residues 42-52 (TNTSITQSPTN) are compositionally biased toward polar residues. The SANT domain maps to 246 to 297 (SMPDIWNEEQHSIFVQQFILHGKKFGKIAEAVPGKNSKECVLHYYLTKRTTD). 4 disordered regions span residues 306 to 329 (TKTK…KSKG), 478 to 499 (YYEP…TRKE), 548 to 570 (PMKM…TFQL), and 604 to 633 (RIDE…PNSQ). Residues 308-328 (TKGRRRKKLLPSQRGGKKKSK) are compositionally biased toward basic residues. Residues 478–487 (YYEPKLEQHS) are compositionally biased toward basic and acidic residues. Over residues 604-617 (RIDELSVEDQEHTT) the composition is skewed to basic and acidic residues.

The protein localises to the nucleus. This is an uncharacterized protein from Schizosaccharomyces pombe (strain 972 / ATCC 24843) (Fission yeast).